The sequence spans 664 residues: MPSRKHLANAIRALSMDGVQKANSGHPGAPMGMADIAEVLWRGHLNHNPSNPEWADRDRFVLSNGHGSMLIYSLLHLSGYELSIDDLKNFRQLHSKTPGHPEYGYAPGIETTTGPLGQGITNAVGMAMAEKALAAQFNKEGHDIVDHFTYVFMGDGCLMEGISHEACSLAGTLGLGKLIAFWDDNGISIDGHVEGWFSDDTPKRFEAYGWHVIPAVDGHNAEAINAAIEAAKADPRPTLICTKTIIGFGSPNKSGSHDCHGAPLGAEEIAAAREFLGWEHPAFEIPADVYAEWDAKAAGAAKEAAWNAKFDAYAAAYPAEAAEFKRRVNGELPAQWEEKANQIIADLQANPANIASRKASQNALEAFGKMLPEFMGGSADLAPSNLTMWSGSKSLEASDFSGNYIHYGVREFGMTAIMNGIALHGGFVPYGATFLMFMEYARNAMRMAALMKVQNIQVYTHDSIGLGEDGPTHQPVEQIASLRLTPNMSTWRPCDQVESAVAWKLAIERKDGPSALIFSRQNLAQQPRSAEQVADIAKGGYILKDSDGKPELILIATGSEVELAVKAAEQLTAEGKKVRVVSMPATDAFDKQDAAYRESVLPSDVTARIAIEAGIADFWYKYVGFDGRIIGMTTFGESAPADQLFEMFGFTVENVVNTAKELLA.

His-26 is a substrate binding site. Thiamine diphosphate-binding positions include His-66 and 114-116; that span reads GPL. Asp-155 is a Mg(2+) binding site. Residues Gly-156 and Asn-185 each contribute to the thiamine diphosphate site. Mg(2+) contacts are provided by Asn-185 and Ile-187. Substrate-binding residues include His-260, Arg-357, and Ser-384. His-260 serves as a coordination point for thiamine diphosphate. Glu-411 acts as the Proton donor in catalysis. Residue Phe-437 coordinates thiamine diphosphate. 3 residues coordinate substrate: His-461, Asp-469, and Arg-520.

Belongs to the transketolase family. Homodimer. Mg(2+) serves as cofactor. Ca(2+) is required as a cofactor. It depends on Mn(2+) as a cofactor. The cofactor is Co(2+). Requires thiamine diphosphate as cofactor.

The catalysed reaction is D-sedoheptulose 7-phosphate + D-glyceraldehyde 3-phosphate = aldehydo-D-ribose 5-phosphate + D-xylulose 5-phosphate. Catalyzes the transfer of a two-carbon ketol group from a ketose donor to an aldose acceptor, via a covalent intermediate with the cofactor thiamine pyrophosphate. This chain is Transketolase 1 (tkt1), found in Vibrio vulnificus (strain YJ016).